The sequence spans 309 residues: tRNA dimethylallyltransferase (309 aa).

11-18 (GPTATGKS) contributes to the ATP binding site. 13-18 (TATGKS) is a substrate binding site.

It belongs to the IPP transferase family. In terms of assembly, monomer. Requires Mg(2+) as cofactor.

It catalyses the reaction adenosine(37) in tRNA + dimethylallyl diphosphate = N(6)-dimethylallyladenosine(37) in tRNA + diphosphate. Its function is as follows. Catalyzes the transfer of a dimethylallyl group onto the adenine at position 37 in tRNAs that read codons beginning with uridine, leading to the formation of N6-(dimethylallyl)adenosine (i(6)A). This is tRNA dimethylallyltransferase from Rhodococcus jostii (strain RHA1).